Reading from the N-terminus, the 629-residue chain is MSRRPVWIDGSDMRPAPLRTAAWLRACLLVGLSTLAMPGWASAPPCPQMTPEAMQNDYQALDARIARWDRAYYRQGQRLVDDGTYDSAKRRLAHWAECFPLLAKPSVNTHEPTGAKHHPVAQTGIAKLPDRDAVAGWVARQGDHPLWVQPKVDGVAVTLVYRHGRLAAAISRGDGVSGQDWYTKALHIAAIPSHLPADAPPLVILQGELYARRTAHRQSRDGTDGARARIAGLMARDTLTDREGSTIGLFVWAWPNGPDTMPERLETLAGWGFGDVAEMTHGVATAEDIAAWRQRWYRHALPFATDGVVVKRGDRPPGSDWQASPPDWAMAWKYPAREALARVDALEFSVGRTGRIAVVAELEPVLLGDKRVTRVSLGSLAHWRRTDVRPGDQVRLRLAGLTIPQLQEVVVRTRPRPQVDAPEADQYDRLSCLRFTPACRDQFLARLEWLGSDEGLDFPGIGPATWNQLVDAGLVKGLLDWRTLDTAALEALPGVGKKTARAWQRHFALADTRSAVRWLRALGVPAVPRQALTDALERYGMAGLGTLAPPDWRDYSGIGETRAMQLTRFFRDTDIRHWLASLESTRALQKQHGTNTRNEQKGDVRRVDVKQDNGTTWLPEQDSNLRPND.

Lys151 functions as the N6-AMP-lysine intermediate in the catalytic mechanism. Residues 588–597 are compositionally biased toward polar residues; that stretch reads LQKQHGTNTR. The segment at 588–629 is disordered; that stretch reads LQKQHGTNTRNEQKGDVRRVDVKQDNGTTWLPEQDSNLRPND. The segment covering 598-611 has biased composition (basic and acidic residues); sequence NEQKGDVRRVDVKQ. Residues 612–629 show a composition bias toward polar residues; the sequence is DNGTTWLPEQDSNLRPND.

This sequence belongs to the NAD-dependent DNA ligase family. LigB subfamily.

It catalyses the reaction NAD(+) + (deoxyribonucleotide)n-3'-hydroxyl + 5'-phospho-(deoxyribonucleotide)m = (deoxyribonucleotide)n+m + AMP + beta-nicotinamide D-nucleotide.. Its function is as follows. Catalyzes the formation of phosphodiester linkages between 5'-phosphoryl and 3'-hydroxyl groups in double-stranded DNA using NAD as a coenzyme and as the energy source for the reaction. This chain is DNA ligase B, found in Chromohalobacter salexigens (strain ATCC BAA-138 / DSM 3043 / CIP 106854 / NCIMB 13768 / 1H11).